Here is a 335-residue protein sequence, read N- to C-terminus: GTPase Obg (335 aa).

The 158-residue stretch at 1-158 (MFVDQITLEL…RLVELELKLI (158 aa)) folds into the Obg domain. Residues 159-334 (ADIGLVGFPN…LYDLFKSKLS (176 aa)) form the OBG-type G domain. GTP contacts are provided by residues 165–172 (GFPNAGKS), 190–194 (FTTLH), 215–218 (DIPG), 285–288 (NKID), and 315–317 (SGL). Mg(2+)-binding residues include serine 172 and threonine 192.

It belongs to the TRAFAC class OBG-HflX-like GTPase superfamily. OBG GTPase family. Monomer. Mg(2+) serves as cofactor.

The protein resides in the cytoplasm. Its function is as follows. An essential GTPase which binds GTP, GDP and possibly (p)ppGpp with moderate affinity, with high nucleotide exchange rates and a fairly low GTP hydrolysis rate. Plays a role in control of the cell cycle, stress response, ribosome biogenesis and in those bacteria that undergo differentiation, in morphogenesis control. The chain is GTPase Obg from Chlamydia trachomatis serovar A (strain ATCC VR-571B / DSM 19440 / HAR-13).